Reading from the N-terminus, the 687-residue chain is FAD-dependent oxidoreductase domain-containing protein 2 (687 aa).

An N-terminal signal peptide occupies residues 1 to 22; it reads MSVIQLVFRLLCVLDLLLAVSA. N-linked (GlcNAc...) asparagine glycans are attached at residues asparagine 29 and asparagine 305.

This sequence belongs to the FOXRED2 family. Requires FAD as cofactor. Post-translationally, N-glycosylated.

It localises to the endoplasmic reticulum lumen. Its function is as follows. Probable flavoprotein which may function in endoplasmic reticulum associated degradation (ERAD). May bind non-native proteins in the endoplasmic reticulum and target them to the ubiquitination machinery for subsequent degradation. The chain is FAD-dependent oxidoreductase domain-containing protein 2 (foxred2) from Danio rerio (Zebrafish).